The primary structure comprises 477 residues: 3-isopropylmalate dehydratase large subunit (477 aa).

Residues Cys-358, Cys-419, and Cys-422 each contribute to the [4Fe-4S] cluster site.

This sequence belongs to the aconitase/IPM isomerase family. LeuC type 1 subfamily. Heterodimer of LeuC and LeuD. [4Fe-4S] cluster is required as a cofactor.

It catalyses the reaction (2R,3S)-3-isopropylmalate = (2S)-2-isopropylmalate. It functions in the pathway amino-acid biosynthesis; L-leucine biosynthesis; L-leucine from 3-methyl-2-oxobutanoate: step 2/4. In terms of biological role, catalyzes the isomerization between 2-isopropylmalate and 3-isopropylmalate, via the formation of 2-isopropylmaleate. In Acinetobacter baylyi (strain ATCC 33305 / BD413 / ADP1), this protein is 3-isopropylmalate dehydratase large subunit.